Here is a 385-residue protein sequence, read N- to C-terminus: MSKRDYYEVLGVSKGASADEIKKGFRKKAKELHPDRNADNPDAEAQFKEANEAYDVLKDPERKAAYDRYGHAAFENGMGGGGGGRAGGHPGGDFSSAFSDVFDDLFGDFMGGGGGRAGARQRATRGADLRYNLRLSLEEAFAGLHKTINVPTSVSCTSCEGTGAEGGAEPTTCPTCSGMGKVRAQQGFFTVERTCPTCSGLGQMIKNPCKTCNGHGRVEKDRSLSVNIPAGVETGTRIRLAGEGEAGLRGGPPGDLYIFIEVARHELFEREGNNLHCRVPVSMAKAALGGAIEVPTIDGGRGRVQIPEGSQSGRQMRLRGKGMPALRGGGTGDMFIELAVETPVNLTPRQKEILKEFDEISEENTNPETRSFFSSVKSFWDGMKG.

The 66-residue stretch at 5 to 70 folds into the J domain; it reads DYYEVLGVSK…ERKAAYDRYG (66 aa). A CR-type zinc finger spans residues 143-221; sequence GLHKTINVPT…CNGHGRVEKD (79 aa). Residues cysteine 156, cysteine 159, cysteine 173, cysteine 176, cysteine 195, cysteine 198, cysteine 209, and cysteine 212 each contribute to the Zn(2+) site. CXXCXGXG motif repeat units lie at residues 156-163, 173-180, 195-202, and 209-216; these read CTSCEGTG, CPTCSGMG, CPTCSGLG, and CKTCNGHG.

Belongs to the DnaJ family. In terms of assembly, homodimer. Zn(2+) serves as cofactor.

It is found in the cytoplasm. Functionally, participates actively in the response to hyperosmotic and heat shock by preventing the aggregation of stress-denatured proteins and by disaggregating proteins, also in an autonomous, DnaK-independent fashion. Unfolded proteins bind initially to DnaJ; upon interaction with the DnaJ-bound protein, DnaK hydrolyzes its bound ATP, resulting in the formation of a stable complex. GrpE releases ADP from DnaK; ATP binding to DnaK triggers the release of the substrate protein, thus completing the reaction cycle. Several rounds of ATP-dependent interactions between DnaJ, DnaK and GrpE are required for fully efficient folding. Also involved, together with DnaK and GrpE, in the DNA replication of plasmids through activation of initiation proteins. The polypeptide is Chaperone protein DnaJ (Ruegeria sp. (strain TM1040) (Silicibacter sp.)).